Reading from the N-terminus, the 305-residue chain is Ribosomal protein L11 methyltransferase (305 aa).

Residues T149, G176, D198, and N240 each contribute to the S-adenosyl-L-methionine site.

This sequence belongs to the methyltransferase superfamily. PrmA family.

Its subcellular location is the cytoplasm. It catalyses the reaction L-lysyl-[protein] + 3 S-adenosyl-L-methionine = N(6),N(6),N(6)-trimethyl-L-lysyl-[protein] + 3 S-adenosyl-L-homocysteine + 3 H(+). Its function is as follows. Methylates ribosomal protein L11. This Trichlorobacter lovleyi (strain ATCC BAA-1151 / DSM 17278 / SZ) (Geobacter lovleyi) protein is Ribosomal protein L11 methyltransferase.